A 132-amino-acid polypeptide reads, in one-letter code: Small ribosomal subunit protein uS8 (132 aa).

It belongs to the universal ribosomal protein uS8 family. Part of the 30S ribosomal subunit. Contacts proteins S5 and S12.

One of the primary rRNA binding proteins, it binds directly to 16S rRNA central domain where it helps coordinate assembly of the platform of the 30S subunit. The polypeptide is Small ribosomal subunit protein uS8 (Streptococcus pyogenes serotype M49 (strain NZ131)).